Reading from the N-terminus, the 184-residue chain is ATP synthase subunit b, chloroplastic (184 aa).

Residues L27–L49 form a helical membrane-spanning segment.

It belongs to the ATPase B chain family. F-type ATPases have 2 components, F(1) - the catalytic core - and F(0) - the membrane proton channel. F(1) has five subunits: alpha(3), beta(3), gamma(1), delta(1), epsilon(1). F(0) has four main subunits: a(1), b(1), b'(1) and c(10-14). The alpha and beta chains form an alternating ring which encloses part of the gamma chain. F(1) is attached to F(0) by a central stalk formed by the gamma and epsilon chains, while a peripheral stalk is formed by the delta, b and b' chains.

The protein resides in the plastid. The protein localises to the chloroplast thylakoid membrane. F(1)F(0) ATP synthase produces ATP from ADP in the presence of a proton or sodium gradient. F-type ATPases consist of two structural domains, F(1) containing the extramembraneous catalytic core and F(0) containing the membrane proton channel, linked together by a central stalk and a peripheral stalk. During catalysis, ATP synthesis in the catalytic domain of F(1) is coupled via a rotary mechanism of the central stalk subunits to proton translocation. Its function is as follows. Component of the F(0) channel, it forms part of the peripheral stalk, linking F(1) to F(0). The chain is ATP synthase subunit b, chloroplastic from Nicotiana sylvestris (Wood tobacco).